Consider the following 322-residue polypeptide: Phosphatidylserine decarboxylase proenzyme (322 aa).

Residues aspartate 90, histidine 147, and serine 254 each act as charge relay system; for autoendoproteolytic cleavage activity in the active site. Residue serine 254 is the Schiff-base intermediate with substrate; via pyruvic acid; for decarboxylase activity of the active site. Pyruvic acid (Ser); by autocatalysis is present on serine 254. Residues 293–322 (PDAEPAPLPAEEIEAEHDASPLVDDKKDQV) form a disordered region. The span at 308–322 (EHDASPLVDDKKDQV) shows a compositional bias: basic and acidic residues.

The protein belongs to the phosphatidylserine decarboxylase family. PSD-B subfamily. Prokaryotic type I sub-subfamily. Heterodimer of a large membrane-associated beta subunit and a small pyruvoyl-containing alpha subunit. It depends on pyruvate as a cofactor. Is synthesized initially as an inactive proenzyme. Formation of the active enzyme involves a self-maturation process in which the active site pyruvoyl group is generated from an internal serine residue via an autocatalytic post-translational modification. Two non-identical subunits are generated from the proenzyme in this reaction, and the pyruvate is formed at the N-terminus of the alpha chain, which is derived from the carboxyl end of the proenzyme. The autoendoproteolytic cleavage occurs by a canonical serine protease mechanism, in which the side chain hydroxyl group of the serine supplies its oxygen atom to form the C-terminus of the beta chain, while the remainder of the serine residue undergoes an oxidative deamination to produce ammonia and the pyruvoyl prosthetic group on the alpha chain. During this reaction, the Ser that is part of the protease active site of the proenzyme becomes the pyruvoyl prosthetic group, which constitutes an essential element of the active site of the mature decarboxylase.

It is found in the cell membrane. The catalysed reaction is a 1,2-diacyl-sn-glycero-3-phospho-L-serine + H(+) = a 1,2-diacyl-sn-glycero-3-phosphoethanolamine + CO2. Its pathway is phospholipid metabolism; phosphatidylethanolamine biosynthesis; phosphatidylethanolamine from CDP-diacylglycerol: step 2/2. Catalyzes the formation of phosphatidylethanolamine (PtdEtn) from phosphatidylserine (PtdSer). The chain is Phosphatidylserine decarboxylase proenzyme from Escherichia coli (strain 55989 / EAEC).